Consider the following 305-residue polypeptide: tRNA dimethylallyltransferase (305 aa).

8–15 (GPTAVGKT) contacts ATP. Position 10 to 15 (10 to 15 (TAVGKT)) interacts with substrate. Residues 33–36 (DSRQ) are interaction with substrate tRNA.

This sequence belongs to the IPP transferase family. As to quaternary structure, monomer. The cofactor is Mg(2+).

The enzyme catalyses adenosine(37) in tRNA + dimethylallyl diphosphate = N(6)-dimethylallyladenosine(37) in tRNA + diphosphate. Functionally, catalyzes the transfer of a dimethylallyl group onto the adenine at position 37 in tRNAs that read codons beginning with uridine, leading to the formation of N6-(dimethylallyl)adenosine (i(6)A). In Thermotoga maritima (strain ATCC 43589 / DSM 3109 / JCM 10099 / NBRC 100826 / MSB8), this protein is tRNA dimethylallyltransferase.